A 482-amino-acid polypeptide reads, in one-letter code: Probable cytosol aminopeptidase (482 aa).

The Mn(2+) site is built by Lys251 and Asp256. Residue Lys263 is part of the active site. Mn(2+) is bound by residues Asp274, Asp333, and Glu335. Arg337 is an active-site residue.

It belongs to the peptidase M17 family. It depends on Mn(2+) as a cofactor.

The protein resides in the cytoplasm. It carries out the reaction Release of an N-terminal amino acid, Xaa-|-Yaa-, in which Xaa is preferably Leu, but may be other amino acids including Pro although not Arg or Lys, and Yaa may be Pro. Amino acid amides and methyl esters are also readily hydrolyzed, but rates on arylamides are exceedingly low.. It catalyses the reaction Release of an N-terminal amino acid, preferentially leucine, but not glutamic or aspartic acids.. In terms of biological role, presumably involved in the processing and regular turnover of intracellular proteins. Catalyzes the removal of unsubstituted N-terminal amino acids from various peptides. In Acinetobacter baumannii (strain AB307-0294), this protein is Probable cytosol aminopeptidase.